The primary structure comprises 446 residues: Dihydroorotate dehydrogenase (quinone), mitochondrial (446 aa).

The transit peptide at 1 to 13 (MHSRPLPTLGRHA) directs the protein to the mitochondrion. A helical transmembrane segment spans residues 40–57 (AILYTAGILGGAFAGYYL). FMN-binding positions include 125–129 (AGLDK) and serine 149. Lysine 129 contacts substrate. 174 to 178 (NRYGF) is a binding site for substrate. FMN is bound by residues asparagine 222 and asparagine 252. Substrate is bound by residues asparagine 252 and 252–257 (NVSSPN). The active-site Nucleophile is serine 255. FMN contacts are provided by lysine 303 and serine 331. 332–333 (NT) contacts substrate. FMN-binding positions include glycine 357, glycine 387, and 408 to 409 (YT).

Belongs to the dihydroorotate dehydrogenase family. Type 2 subfamily. The cofactor is FMN.

Its subcellular location is the mitochondrion inner membrane. It carries out the reaction (S)-dihydroorotate + a quinone = orotate + a quinol. It functions in the pathway pyrimidine metabolism; UMP biosynthesis via de novo pathway; orotate from (S)-dihydroorotate (quinone route): step 1/1. Its activity is regulated as follows. The activity is dependent of the presence of oxygen. In terms of biological role, catalyzes the conversion of dihydroorotate to orotate with quinone as electron acceptor. The sequence is that of Dihydroorotate dehydrogenase (quinone), mitochondrial (URA9) from Lachancea kluyveri (strain ATCC 58438 / CBS 3082 / BCRC 21498 / NBRC 1685 / JCM 7257 / NCYC 543 / NRRL Y-12651) (Yeast).